The following is a 119-amino-acid chain: Holo-[acyl-carrier-protein] synthase (119 aa).

Residues D8 and E59 each coordinate Mg(2+).

The protein belongs to the P-Pant transferase superfamily. AcpS family. Requires Mg(2+) as cofactor.

It localises to the cytoplasm. It catalyses the reaction apo-[ACP] + CoA = holo-[ACP] + adenosine 3',5'-bisphosphate + H(+). Transfers the 4'-phosphopantetheine moiety from coenzyme A to a Ser of acyl-carrier-protein. The polypeptide is Holo-[acyl-carrier-protein] synthase (Lactococcus lactis subsp. lactis (strain IL1403) (Streptococcus lactis)).